We begin with the raw amino-acid sequence, 267 residues long: Undecaprenyl-diphosphatase (267 aa).

8 helical membrane-spanning segments follow: residues 1-21 (MTYF…FLPI), 39-59 (QGLA…VMYF), 87-107 (WLII…KDFI), 111-131 (LRSA…LWWV), 149-169 (ALFL…RSGI), 189-209 (FLMS…KLAL), 218-238 (FLGT…HFFL), and 246-266 (MTPF…WLAL).

This sequence belongs to the UppP family.

The protein localises to the cell inner membrane. It catalyses the reaction di-trans,octa-cis-undecaprenyl diphosphate + H2O = di-trans,octa-cis-undecaprenyl phosphate + phosphate + H(+). In terms of biological role, catalyzes the dephosphorylation of undecaprenyl diphosphate (UPP). Confers resistance to bacitracin. This Aliivibrio salmonicida (strain LFI1238) (Vibrio salmonicida (strain LFI1238)) protein is Undecaprenyl-diphosphatase.